Consider the following 192-residue polypeptide: Outer-membrane lipoprotein LolB (192 aa).

The N-terminal stretch at 1–17 (MTYRTLCILAFTALISA) is a signal peptide. A lipid anchor (N-palmitoyl cysteine) is attached at Cys18. A lipid anchor (S-diacylglycerol cysteine) is attached at Cys18.

This sequence belongs to the LolB family. Monomer.

It localises to the cell outer membrane. In terms of biological role, plays a critical role in the incorporation of lipoproteins in the outer membrane after they are released by the LolA protein. This is Outer-membrane lipoprotein LolB from Marinomonas sp. (strain MWYL1).